A 569-amino-acid chain; its full sequence is Aspartic proteinase 3 (569 aa).

The first 21 residues, 1–21 (MKLKTVRSAVLSSLFASQVLG), serve as a signal peptide directing secretion. The propeptide occupies 22 to 67 (KIIPAANKRDDDSNSKFVKLPFHKLYGDSLENVGSDKKPEVRLLKR). The Peptidase A1 domain maps to 83–475 (YSVDLEVGTP…DLENLEISMA (393 aa)). N-linked (GlcNAc...) asparagine glycosylation is present at asparagine 95. The active site involves aspartate 101. N-linked (GlcNAc...) asparagine glycosylation is found at asparagine 203, asparagine 232, asparagine 242, asparagine 245, asparagine 299, and asparagine 358. Aspartate 371 is an active-site residue. N-linked (GlcNAc...) asparagine glycosylation is found at asparagine 480, asparagine 522, and asparagine 532. Asparagine 548 carries GPI-anchor amidated asparagine lipidation. A propeptide spans 549-569 (VGDHIVPSLPLTLISLLFAFI) (removed in mature form).

Belongs to the peptidase A1 family. In terms of assembly, consists of an alpha and a beta subunit, which are maintained together by a disulfide bond. Post-translationally, the zymogen is transported to the periplasm, where the propeptide is removed and the enzyme is further subjected to an internal, autocatalytic cleavage to generate an alpha/beta two-subunit endopeptidase. The proteolytic processing at the cell surface is regulated by the environmental pH. In terms of processing, extensively N-glycosylated.

It is found in the cell membrane. It carries out the reaction Hydrolyzes various precursor proteins with Arg or Lys in P1, and commonly Arg or Lys also in P2. The P3 amino acid is usually non-polar, but otherwise additional basic amino acids are favorable in both non-prime and prime positions.. Cleaves proteins C-terminally to mono- and paired-basic residues. Involved in the shedding of a subset of GPI-anchored plasma membrane proteins from the cell surface, including itself, GAS1 and MSB2. May also play a role in the maturation of GPI-mannoproteins associated with the cell wall. Can process the alpha-mating factor precursor. Required for cell wall integrity. The chain is Aspartic proteinase 3 (YPS1) from Saccharomyces cerevisiae (strain ATCC 204508 / S288c) (Baker's yeast).